The chain runs to 302 residues: Oxygen-dependent coproporphyrinogen-III oxidase (302 aa).

Ser-94 is a substrate binding site. The a divalent metal cation site is built by His-98 and His-108. His-108 serves as the catalytic Proton donor. Residue 110–112 coordinates substrate; that stretch reads NVR. The a divalent metal cation site is built by His-147 and His-177. Residues 242-277 are important for dimerization; sequence YVEFNLVYDRGTIFGLQSGGRTESILMSLPPLVRWD. 260–262 lines the substrate pocket; it reads GGR.

It belongs to the aerobic coproporphyrinogen-III oxidase family. In terms of assembly, homodimer. The cofactor is a divalent metal cation.

The protein localises to the cytoplasm. The enzyme catalyses coproporphyrinogen III + O2 + 2 H(+) = protoporphyrinogen IX + 2 CO2 + 2 H2O. Its pathway is porphyrin-containing compound metabolism; protoporphyrin-IX biosynthesis; protoporphyrinogen-IX from coproporphyrinogen-III (O2 route): step 1/1. Involved in the heme biosynthesis. Catalyzes the aerobic oxidative decarboxylation of propionate groups of rings A and B of coproporphyrinogen-III to yield the vinyl groups in protoporphyrinogen-IX. The chain is Oxygen-dependent coproporphyrinogen-III oxidase from Alcanivorax borkumensis (strain ATCC 700651 / DSM 11573 / NCIMB 13689 / SK2).